An 853-amino-acid polypeptide reads, in one-letter code: DNA (cytosine-5)-methyltransferase 3B (853 aa).

The span at Met-1–Ser-20 shows a compositional bias: basic and acidic residues. The disordered stretch occupies residues Met-1 to Gln-218. The interval Met-1–Tyr-298 is interaction with DNMT1 and DNMT3A. Residues Gly-72–Gly-81 are compositionally biased toward acidic residues. At Ser-82 the chain carries Phosphoserine. A Glycyl lysine isopeptide (Lys-Gly) (interchain with G-Cter in SUMO2) cross-link involves residue Lys-89. Thr-96 is modified (phosphothreonine). A phosphoserine mark is found at Ser-100 and Ser-110. A compositionally biased stretch (basic residues) spans Glu-115–Arg-130. A phosphoserine mark is found at Ser-136, Ser-195, Ser-202, and Ser-209. The segment covering Gly-179–Gly-199 has biased composition (polar residues). Residues Ile-225–Phe-283 enclose the PWWP domain. The disordered stretch occupies residues Lys-341–Asp-423. 2 stretches are compositionally biased toward basic and acidic residues: residues Arg-368 to Asp-385 and Gly-407 to Arg-417. At Arg-410 the chain carries Citrulline. The ADD domain maps to Asp-423–Gly-555. Residues Gly-434–Glu-464 form a GATA-type; atypical zinc finger. The tract at residues Cys-435–Cys-527 is interaction with the PRC2/EED-EZH2 complex. Residues Gln-475 to Arg-531 form a PHD-type; atypical zinc finger. The 279-residue stretch at Ile-575–Glu-853 folds into the SAM-dependent MTase C5-type domain. S-adenosyl-L-methionine is bound by residues Asp-582–Thr-586 and Glu-605. Lys-617 is covalently cross-linked (Glycyl lysine isopeptide (Lys-Gly) (interchain with G-Cter in SUMO2)). Residue Asp-627–Arg-629 participates in S-adenosyl-L-methionine binding. Cys-651 is a catalytic residue. Arg-832–Trp-834 provides a ligand contact to S-adenosyl-L-methionine.

This sequence belongs to the class I-like SAM-binding methyltransferase superfamily. C5-methyltransferase family. In terms of assembly, interacts with BAZ2A/TIP5, SUV39H1 and CBX4. Interacts with UHRF1. Interacts with DNMT1 and DNMT3A, SETDB1, UBL1, UBE2I9 and ZHX1. Interacts with the PRC2/EED-EZH2 complex. Sumoylated. Post-translationally, citrullinated by PADI4. In terms of tissue distribution, ubiquitous; highly expressed in fetal liver, heart, kidney, placenta, and at lower levels in spleen, colon, brain, liver, small intestine, lung, peripheral blood mononuclear cells, and skeletal muscle. Isoform 1 is expressed in all tissues except brain, skeletal muscle and PBMC, 3 is ubiquitous, 4 is expressed in all tissues except brain, skeletal muscle, lung and prostate and 5 is detectable only in testis and at very low level in brain and prostate.

The protein localises to the nucleus. It carries out the reaction a 2'-deoxycytidine in DNA + S-adenosyl-L-methionine = a 5-methyl-2'-deoxycytidine in DNA + S-adenosyl-L-homocysteine + H(+). Its activity is regulated as follows. Activated by binding to the regulatory factor DNMT3L. Functionally, required for genome-wide de novo methylation and is essential for the establishment of DNA methylation patterns during development. DNA methylation is coordinated with methylation of histones. May preferentially methylates nucleosomal DNA within the nucleosome core region. May function as transcriptional co-repressor by associating with CBX4 and independently of DNA methylation. Seems to be involved in gene silencing. In association with DNMT1 and via the recruitment of CTCFL/BORIS, involved in activation of BAG1 gene expression by modulating dimethylation of promoter histone H3 at H3K4 and H3K9. Isoforms 4 and 5 are probably not functional due to the deletion of two conserved methyltransferase motifs. Functions as a transcriptional corepressor by associating with ZHX1. Required for DUX4 silencing in somatic cells. The chain is DNA (cytosine-5)-methyltransferase 3B (DNMT3B) from Homo sapiens (Human).